The primary structure comprises 134 residues: 6,7-dimethyl-8-ribityllumazine synthase (134 aa).

Residues Phe-11, 43 to 45 (AYD), and 67 to 69 (AIV) each bind 5-amino-6-(D-ribitylamino)uracil. A (2S)-2-hydroxy-3-oxobutyl phosphate-binding site is contributed by 72 to 73 (DT). The active-site Proton donor is His-75. Phe-100 lines the 5-amino-6-(D-ribitylamino)uracil pocket. Arg-115 is a binding site for (2S)-2-hydroxy-3-oxobutyl phosphate.

This sequence belongs to the DMRL synthase family.

It carries out the reaction (2S)-2-hydroxy-3-oxobutyl phosphate + 5-amino-6-(D-ribitylamino)uracil = 6,7-dimethyl-8-(1-D-ribityl)lumazine + phosphate + 2 H2O + H(+). It functions in the pathway cofactor biosynthesis; riboflavin biosynthesis; riboflavin from 2-hydroxy-3-oxobutyl phosphate and 5-amino-6-(D-ribitylamino)uracil: step 1/2. Catalyzes the formation of 6,7-dimethyl-8-ribityllumazine by condensation of 5-amino-6-(D-ribitylamino)uracil with 3,4-dihydroxy-2-butanone 4-phosphate. This is the penultimate step in the biosynthesis of riboflavin. The polypeptide is 6,7-dimethyl-8-ribityllumazine synthase (Halorubrum lacusprofundi (strain ATCC 49239 / DSM 5036 / JCM 8891 / ACAM 34)).